The sequence spans 75 residues: RNA-binding protein KhpA (75 aa).

The 47-residue stretch at 29–75 folds into the KH domain; the sequence is KVVYHLTVHPDDVGKVIGKNGRIAKAIRTVVYASKTDGNKRIYLDIM.

It belongs to the KhpA RNA-binding protein family. As to quaternary structure, forms a complex with KhpB.

The protein resides in the cytoplasm. Functionally, a probable RNA chaperone. Forms a complex with KhpB which binds to cellular RNA and controls its expression. Plays a role in peptidoglycan (PG) homeostasis and cell length regulation. In Oceanobacillus iheyensis (strain DSM 14371 / CIP 107618 / JCM 11309 / KCTC 3954 / HTE831), this protein is RNA-binding protein KhpA.